Here is a 131-residue protein sequence, read N- to C-terminus: MPTINQLVRNERKKVTVKSKSPALKECPQRRGVCTRVYTTTPKKPNSALRKVAKVRLTSGFEVISYIGGEGHNLQEHSIVLVRGGRVKDLPGVKYHIVRGALDTAGVAKRTVSRSKYGAKRPKAGAAAPKK.

At aspartate 89 the chain carries 3-methylthioaspartic acid.

This sequence belongs to the universal ribosomal protein uS12 family. As to quaternary structure, part of the 30S ribosomal subunit. Contacts proteins S8 and S17. May interact with IF1 in the 30S initiation complex.

In terms of biological role, with S4 and S5 plays an important role in translational accuracy. Its function is as follows. Interacts with and stabilizes bases of the 16S rRNA that are involved in tRNA selection in the A site and with the mRNA backbone. Located at the interface of the 30S and 50S subunits, it traverses the body of the 30S subunit contacting proteins on the other side and probably holding the rRNA structure together. The combined cluster of proteins S8, S12 and S17 appears to hold together the shoulder and platform of the 30S subunit. The sequence is that of Small ribosomal subunit protein uS12 from Campylobacter concisus (strain 13826).